The chain runs to 409 residues: MPVNIPPLLPEQLLPIPGLSLGTAEASIKRPGRKDILVITLAENTRVAGVFTRNRFCAAPVTVARSHLTGSLPIRALVINTGNANAGTGQSGIDHAHATCASLARLIGCQTQQVLPFSTGVIMEPLPVEKIITHLPQALANLAPDNWFAAAQAIMTTDIVPKGVSRQIQINGTTVTITGIAKGSGMIHPNMATMLGYIATDAAVTQPLLDDLVRYATDRSFNCVTVDGDTSTNDALILMATGQAGNTPITVSTDPAFISLQAAITEVAALLAQMIVRDGEGATKFITVQVESGKTREECTKVAYAIAHSPLIKTACFASDPNLGRILAAIGYAGIEDLDVNLVQLYLGNILVAEHGGRAASYREEDGQRIMQAPEITIQVKLNRGNASTTVWTCDLSYDYVKINADYRS.

Residues threonine 156, lysine 182, threonine 193, glutamate 280, asparagine 404, and serine 409 each coordinate substrate. Threonine 193 functions as the Nucleophile in the catalytic mechanism.

This sequence belongs to the ArgJ family. In terms of assembly, heterotetramer of two alpha and two beta chains.

It is found in the cytoplasm. The enzyme catalyses N(2)-acetyl-L-ornithine + L-glutamate = N-acetyl-L-glutamate + L-ornithine. The catalysed reaction is L-glutamate + acetyl-CoA = N-acetyl-L-glutamate + CoA + H(+). Its pathway is amino-acid biosynthesis; L-arginine biosynthesis; L-ornithine and N-acetyl-L-glutamate from L-glutamate and N(2)-acetyl-L-ornithine (cyclic): step 1/1. It participates in amino-acid biosynthesis; L-arginine biosynthesis; N(2)-acetyl-L-ornithine from L-glutamate: step 1/4. In terms of biological role, catalyzes two activities which are involved in the cyclic version of arginine biosynthesis: the synthesis of N-acetylglutamate from glutamate and acetyl-CoA as the acetyl donor, and of ornithine by transacetylation between N(2)-acetylornithine and glutamate. The polypeptide is Arginine biosynthesis bifunctional protein ArgJ (Nitrosomonas europaea (strain ATCC 19718 / CIP 103999 / KCTC 2705 / NBRC 14298)).